The following is a 516-amino-acid chain: GMP synthase [glutamine-hydrolyzing] (516 aa).

The Glutamine amidotransferase type-1 domain maps to 7–199 (KIIILDFGSQ…VFGLCKCQAT (193 aa)). Residue Cys84 is the Nucleophile of the active site. Residues His173 and Glu175 contribute to the active site. Positions 200–391 (WTMQGFIESN…LGLPDEAVHR (192 aa)) constitute a GMPS ATP-PPase domain. 227–233 (SGGVDSS) serves as a coordination point for ATP.

As to quaternary structure, homodimer.

The enzyme catalyses XMP + L-glutamine + ATP + H2O = GMP + L-glutamate + AMP + diphosphate + 2 H(+). Its pathway is purine metabolism; GMP biosynthesis; GMP from XMP (L-Gln route): step 1/1. Functionally, catalyzes the synthesis of GMP from XMP. This Desulfotalea psychrophila (strain LSv54 / DSM 12343) protein is GMP synthase [glutamine-hydrolyzing].